Here is a 181-residue protein sequence, read N- to C-terminus: Adenylate kinase (181 aa).

10–15 (GAGKGT) serves as a coordination point for ATP. The interval 30–59 (STGELFRRNIEKDTKLGHEAKKYLDAGDLV) is NMP. AMP contacts are provided by residues Thr31, Arg36, 57–59 (DLV), 85–88 (GYPR), and Gln92. Positions 126–132 (GRGRADD) are LID. ATP is bound at residue Arg127. AMP-binding residues include Arg129 and Arg140. Gly166 provides a ligand contact to ATP.

Belongs to the adenylate kinase family. In terms of assembly, monomer.

The protein resides in the cytoplasm. It carries out the reaction AMP + ATP = 2 ADP. The protein operates within purine metabolism; AMP biosynthesis via salvage pathway; AMP from ADP: step 1/1. Its function is as follows. Catalyzes the reversible transfer of the terminal phosphate group between ATP and AMP. Plays an important role in cellular energy homeostasis and in adenine nucleotide metabolism. This is Adenylate kinase from Mycobacterium leprae (strain Br4923).